A 238-amino-acid polypeptide reads, in one-letter code: Lytic polysaccharide monooxygenase NCU01050 (238 aa).

Positions 1-15 are cleaved as a signal peptide; that stretch reads MKVLAPLVLASAASA. Histidine 16 contacts Cu(2+). Residue glutamate 45 participates in O2 binding. Disulfide bonds link cysteine 54-cysteine 186 and cysteine 156-cysteine 238. Asparagine 75 carries an N-linked (GlcNAc...) asparagine glycan. Histidine 99 is a binding site for Cu(2+). O2 contacts are provided by histidine 172 and glutamine 181. Histidine 172 functions as the Proton donor in the catalytic mechanism. Tyrosine 183 contacts Cu(2+).

The protein belongs to the polysaccharide monooxygenase AA9 family. Monomer. Cu(2+) is required as a cofactor. In terms of processing, N-linked glycans containing mannose and N-acetylglucosamine.

Its subcellular location is the secreted. It carries out the reaction [(1-&gt;4)-beta-D-glucosyl]n+m + reduced acceptor + O2 = 4-dehydro-beta-D-glucosyl-[(1-&gt;4)-beta-D-glucosyl]n-1 + [(1-&gt;4)-beta-D-glucosyl]m + acceptor + H2O.. The protein operates within glycan metabolism; cellulose degradation. With respect to regulation, inhibited by increasing levels of ascorbic acid. Functionally, catalyzes the oxidative cleavage of glycosidic bonds in cellulosic substrates via a copper-dependent mechanism. In the presence of an exogenous reductant ascorbic acid, degrades phosphoric acid swollen cellulose (PASC) to cello-oligosaccharides and 4-ketoaldoses, the end products oxidized at the non-reducing end. Somewhat active toward tamarind xyloglucan and konjac glucomannan, with improved activity with glucomannan in the presence of PASC. H(2)O(2) is able to substitute for O(2) in reactions with PASC, xyloglucan and glucomannan. Very weak activity on cellopentaose. No activity with birchwood xylan or ivory nut mannan. Disrupts plant cell wall polysaccharide substrates, such as recalcitrant crystalline cellulose. This chain is Lytic polysaccharide monooxygenase NCU01050, found in Neurospora crassa (strain ATCC 24698 / 74-OR23-1A / CBS 708.71 / DSM 1257 / FGSC 987).